The primary structure comprises 423 residues: Lipoyl synthase 1, mitochondrial (423 aa).

Cysteine 127, cysteine 132, cysteine 138, cysteine 159, cysteine 163, cysteine 166, and serine 375 together coordinate [4Fe-4S] cluster. Residues 142–364 form the Radical SAM core domain; the sequence is DEEEGTATAT…EEEAMAMGFL (223 aa).

This sequence belongs to the radical SAM superfamily. Lipoyl synthase family. [4Fe-4S] cluster is required as a cofactor.

The protein localises to the mitochondrion. The enzyme catalyses [[Fe-S] cluster scaffold protein carrying a second [4Fe-4S](2+) cluster] + N(6)-octanoyl-L-lysyl-[protein] + 2 oxidized [2Fe-2S]-[ferredoxin] + 2 S-adenosyl-L-methionine + 4 H(+) = [[Fe-S] cluster scaffold protein] + N(6)-[(R)-dihydrolipoyl]-L-lysyl-[protein] + 4 Fe(3+) + 2 hydrogen sulfide + 2 5'-deoxyadenosine + 2 L-methionine + 2 reduced [2Fe-2S]-[ferredoxin]. It functions in the pathway protein modification; protein lipoylation via endogenous pathway; protein N(6)-(lipoyl)lysine from octanoyl-[acyl-carrier-protein]: step 2/2. Catalyzes the radical-mediated insertion of two sulfur atoms into the C-6 and C-8 positions of the octanoyl moiety bound to the lipoyl domains of lipoate-dependent enzymes, thereby converting the octanoylated domains into lipoylated derivatives. In Trypanosoma cruzi (strain CL Brener), this protein is Lipoyl synthase 1, mitochondrial.